Here is a 143-residue protein sequence, read N- to C-terminus: Large ribosomal subunit protein uL15 (143 aa).

The tract at residues 1-59 (MELNGIKPSLGAKHAKRRVGRGIGSGLGKTAGRGHKGQKSRAGGYHKVGFEGGQMPMQR) is disordered. Over residues 21–31 (RGIGSGLGKTA) the composition is skewed to gly residues.

This sequence belongs to the universal ribosomal protein uL15 family. In terms of assembly, part of the 50S ribosomal subunit.

Binds to the 23S rRNA. This chain is Large ribosomal subunit protein uL15, found in Polaromonas sp. (strain JS666 / ATCC BAA-500).